Reading from the N-terminus, the 252-residue chain is tRNA (guanine-N(1)-)-methyltransferase (252 aa).

S-adenosyl-L-methionine-binding positions include glycine 118 and 138–143 (IGDYVL).

This sequence belongs to the RNA methyltransferase TrmD family. Homodimer.

It localises to the cytoplasm. The enzyme catalyses guanosine(37) in tRNA + S-adenosyl-L-methionine = N(1)-methylguanosine(37) in tRNA + S-adenosyl-L-homocysteine + H(+). Its function is as follows. Specifically methylates guanosine-37 in various tRNAs. The protein is tRNA (guanine-N(1)-)-methyltransferase of Pseudomonas aeruginosa (strain UCBPP-PA14).